A 126-amino-acid chain; its full sequence is Large ribosomal subunit protein bL12 (126 aa).

It belongs to the bacterial ribosomal protein bL12 family. Homodimer. Part of the ribosomal stalk of the 50S ribosomal subunit. Forms a multimeric L10(L12)X complex, where L10 forms an elongated spine to which 2 to 4 L12 dimers bind in a sequential fashion. Binds GTP-bound translation factors.

Forms part of the ribosomal stalk which helps the ribosome interact with GTP-bound translation factors. Is thus essential for accurate translation. The polypeptide is Large ribosomal subunit protein bL12 (Tropheryma whipplei (strain TW08/27) (Whipple's bacillus)).